Consider the following 493-residue polypeptide: Glutamyl-tRNA(Gln) amidotransferase subunit A (493 aa).

Residues Lys-79 and Ser-159 each act as charge relay system in the active site. Residue Ser-183 is the Acyl-ester intermediate of the active site.

This sequence belongs to the amidase family. GatA subfamily. In terms of assembly, heterotrimer of A, B and C subunits.

It carries out the reaction L-glutamyl-tRNA(Gln) + L-glutamine + ATP + H2O = L-glutaminyl-tRNA(Gln) + L-glutamate + ADP + phosphate + H(+). Allows the formation of correctly charged Gln-tRNA(Gln) through the transamidation of misacylated Glu-tRNA(Gln) in organisms which lack glutaminyl-tRNA synthetase. The reaction takes place in the presence of glutamine and ATP through an activated gamma-phospho-Glu-tRNA(Gln). The protein is Glutamyl-tRNA(Gln) amidotransferase subunit A of Rhizobium meliloti (strain 1021) (Ensifer meliloti).